The primary structure comprises 448 residues: ATP-dependent RNA helicase sub2 (448 aa).

A compositionally biased stretch (low complexity) spans 19–29 (DAAATTAAPAA). The segment at 19–43 (DAAATTAAPAANGAQDKKGDLTVSG) is disordered. The short motif at 58-86 (TGFRDFLLKGELLRAITDCGFEHPSEVQQ) is the Q motif element. Residues 89-271 (IPTAILNVDV…KKFMRNPLEV (183 aa)) form the Helicase ATP-binding domain. 102–109 (AKSGLGKT) provides a ligand contact to ATP. The short motif at 211-214 (DECD) is the DECD box element. The 162-residue stretch at 283–444 (GLQQYYIKLS…EYPEGGVDSS (162 aa)) folds into the Helicase C-terminal domain.

This sequence belongs to the DEAD box helicase family. DECD subfamily.

It is found in the nucleus. The enzyme catalyses ATP + H2O = ADP + phosphate + H(+). Its function is as follows. ATP-binding RNA helicase involved in transcription elongation and required for the export of mRNA out of the nucleus. SUB2 also plays a role in pre-mRNA splicing and spliceosome assembly. May be involved in rDNA and telomeric silencing, and maintenance of genome integrity. The sequence is that of ATP-dependent RNA helicase sub2 (sub2) from Aspergillus fumigatus (strain ATCC MYA-4609 / CBS 101355 / FGSC A1100 / Af293) (Neosartorya fumigata).